The chain runs to 291 residues: tRNA dimethylallyltransferase (291 aa).

Residue 9-16 participates in ATP binding; it reads GTTASGKS. Substrate is bound at residue 11 to 16; sequence TASGKS. An interaction with substrate tRNA region spans residues 34–37; it reads DSLA.

It belongs to the IPP transferase family. In terms of assembly, monomer. It depends on Mg(2+) as a cofactor.

The enzyme catalyses adenosine(37) in tRNA + dimethylallyl diphosphate = N(6)-dimethylallyladenosine(37) in tRNA + diphosphate. Catalyzes the transfer of a dimethylallyl group onto the adenine at position 37 in tRNAs that read codons beginning with uridine, leading to the formation of N6-(dimethylallyl)adenosine (i(6)A). The protein is tRNA dimethylallyltransferase of Campylobacter concisus (strain 13826).